The chain runs to 624 residues: Sulfite reductase [ferredoxin] (624 aa).

Residues 52–137 (YQQDNRDNRV…ENLGSTISAC (86 aa)) constitute a cross-link (3'-(S-cysteinyl)-tyrosine (Tyr-Cys)). [4Fe-4S] cluster contacts are provided by Cys-446, Cys-452, Cys-491, and Cys-495. Cys-495 contributes to the siroheme binding site.

The protein belongs to the nitrite and sulfite reductase 4Fe-4S domain family. Monomer. Siroheme serves as cofactor. Requires [4Fe-4S] cluster as cofactor.

The catalysed reaction is hydrogen sulfide + 6 oxidized [2Fe-2S]-[ferredoxin] + 3 H2O = sulfite + 6 reduced [2Fe-2S]-[ferredoxin] + 7 H(+). Its function is as follows. Catalyzes the reduction of sulfite to sulfide, a step in the biosynthesis of sulfur-containing amino acids and cofactors. The polypeptide is Sulfite reductase [ferredoxin] (sir) (Synechococcus elongatus (strain ATCC 33912 / PCC 7942 / FACHB-805) (Anacystis nidulans R2)).